The primary structure comprises 213 residues: Histone H1 (213 aa).

The segment covering 1–25 (MAAATASAAATPAKKAAPKKPAAAP) has biased composition (low complexity). Disordered regions lie at residues 1-30 (MAAATASAAATPAKKAAPKKPAAAPEHPSY) and 81-213 (GEFV…AKSS). An H15 domain is found at 26–97 (EHPSYKEMLT…GPSGTVKLAK (72 aa)). 4 stretches are compositionally biased toward low complexity: residues 102–113 (AAAPKKPAAKKA), 123–137 (KKAAAPKKAAAPKSA), 157–176 (KKAAAPKKVAAPVEKPAPVK), and 203–213 (PKKAATPAKSS).

It belongs to the histone H1/H5 family.

Its subcellular location is the nucleus. It is found in the chromosome. Could act as an H1-type linker histone. This chain is Histone H1, found in Ascobolus immersus.